Reading from the N-terminus, the 184-residue chain is uncharacterized protein (184 aa).

A disordered region spans residues 1 to 24; the sequence is MGISDQINSNLSSQSPFTVSTNPS.

This is an uncharacterized protein from Dictyostelium discoideum (Social amoeba).